The sequence spans 468 residues: Glycosyl hydrolase family 109 protein (468 aa).

The signal sequence occupies residues 1–19 (MVYKVFLSLCIGLALSASA). NAD(+)-binding positions include 67 to 68 (MR), Asp89, 138 to 141 (WKTH), 158 to 159 (EV), and Asn187. Residues Tyr216, Arg232, 244 to 247 (YATH), and Tyr322 each bind substrate. NAD(+) is bound at residue Tyr244.

This sequence belongs to the Gfo/Idh/MocA family. Glycosyl hydrolase 109 subfamily. The cofactor is NAD(+).

Glycosidase. The sequence is that of Glycosyl hydrolase family 109 protein from Porphyromonas gingivalis (strain ATCC BAA-308 / W83).